An 844-amino-acid polypeptide reads, in one-letter code: Meiotically up-regulated gene 61 protein (844 aa).

Disordered stretches follow at residues 333-354 (ENNS…PQSQ) and 384-415 (NFGL…EISS). Residues 384–394 (NFGLEASNTST) show a composition bias toward polar residues. A compositionally biased stretch (basic and acidic residues) spans 395–407 (PEKKKFDSQKPDD). The chain crosses the membrane as a helical span at residues 459–479 (VVNSLWLVLLVVPLLGFVGFW). 605 to 612 (AKNLNGKS) contributes to the ATP binding site. A helical transmembrane segment spans residues 705-725 (VISCWRIYLLIGILAAITGTV).

Interacts with sad1.

The protein localises to the endoplasmic reticulum membrane. The protein resides in the nucleus membrane. In terms of biological role, required for correct meiotic chromosome segregation. The polypeptide is Meiotically up-regulated gene 61 protein (mug61) (Schizosaccharomyces pombe (strain 972 / ATCC 24843) (Fission yeast)).